The sequence spans 205 residues: High frequency lysogenization protein HflD homolog (205 aa).

The protein belongs to the HflD family.

The protein resides in the cytoplasm. Its subcellular location is the cell inner membrane. The sequence is that of High frequency lysogenization protein HflD homolog from Shewanella baltica (strain OS185).